Here is a 689-residue protein sequence, read N- to C-terminus: Glycine--tRNA ligase beta subunit (689 aa).

The protein belongs to the class-II aminoacyl-tRNA synthetase family. In terms of assembly, tetramer of two alpha and two beta subunits.

It localises to the cytoplasm. The enzyme catalyses tRNA(Gly) + glycine + ATP = glycyl-tRNA(Gly) + AMP + diphosphate. In Shewanella baltica (strain OS223), this protein is Glycine--tRNA ligase beta subunit.